The sequence spans 310 residues: Acetyl-coenzyme A carboxylase carboxyl transferase subunit beta (310 aa).

Positions 27 to 296 constitute a CoA carboxyltransferase N-terminal domain; it reads LWKKCPKCSA…PEFENEEELE (270 aa). Zn(2+) contacts are provided by Cys31, Cys34, Cys50, and Cys53. Residues 31–53 form a C4-type zinc finger; sequence CPKCSAVLYRPELEKNLDVCPKC. Positions 285-310 are disordered; that stretch reads PEPEFENEEELEEEEMERPEPPDNVE. Residues 287–310 show a composition bias toward acidic residues; sequence PEFENEEELEEEEMERPEPPDNVE.

Belongs to the AccD/PCCB family. As to quaternary structure, acetyl-CoA carboxylase is a heterohexamer composed of biotin carboxyl carrier protein (AccB), biotin carboxylase (AccC) and two subunits each of ACCase subunit alpha (AccA) and ACCase subunit beta (AccD). The cofactor is Zn(2+).

The protein localises to the cytoplasm. It catalyses the reaction N(6)-carboxybiotinyl-L-lysyl-[protein] + acetyl-CoA = N(6)-biotinyl-L-lysyl-[protein] + malonyl-CoA. It functions in the pathway lipid metabolism; malonyl-CoA biosynthesis; malonyl-CoA from acetyl-CoA: step 1/1. Component of the acetyl coenzyme A carboxylase (ACC) complex. Biotin carboxylase (BC) catalyzes the carboxylation of biotin on its carrier protein (BCCP) and then the CO(2) group is transferred by the transcarboxylase to acetyl-CoA to form malonyl-CoA. This Hahella chejuensis (strain KCTC 2396) protein is Acetyl-coenzyme A carboxylase carboxyl transferase subunit beta.